The primary structure comprises 349 residues: Phosphoribosylformylglycinamidine cyclo-ligase (349 aa).

Belongs to the AIR synthase family.

It is found in the cytoplasm. It carries out the reaction 2-formamido-N(1)-(5-O-phospho-beta-D-ribosyl)acetamidine + ATP = 5-amino-1-(5-phospho-beta-D-ribosyl)imidazole + ADP + phosphate + H(+). It functions in the pathway purine metabolism; IMP biosynthesis via de novo pathway; 5-amino-1-(5-phospho-D-ribosyl)imidazole from N(2)-formyl-N(1)-(5-phospho-D-ribosyl)glycinamide: step 2/2. The polypeptide is Phosphoribosylformylglycinamidine cyclo-ligase (Psychrobacter arcticus (strain DSM 17307 / VKM B-2377 / 273-4)).